The primary structure comprises 209 residues: Large ribosomal subunit protein uL4 (209 aa).

The disordered stretch occupies residues 46–76 (RGTASTKTRGEVSGGGRKPWRQKGTGRARHG). Over residues 63–76 (KPWRQKGTGRARHG) the composition is skewed to basic residues.

It belongs to the universal ribosomal protein uL4 family. In terms of assembly, part of the 50S ribosomal subunit.

Its function is as follows. One of the primary rRNA binding proteins, this protein initially binds near the 5'-end of the 23S rRNA. It is important during the early stages of 50S assembly. It makes multiple contacts with different domains of the 23S rRNA in the assembled 50S subunit and ribosome. In terms of biological role, forms part of the polypeptide exit tunnel. The chain is Large ribosomal subunit protein uL4 from Halothermothrix orenii (strain H 168 / OCM 544 / DSM 9562).